A 483-amino-acid chain; its full sequence is Deoxyribodipyrimidine photo-lyase (483 aa).

Residues 2–136 (QKNLIWFRND…LVKGFHDNLL (135 aa)) form the Photolyase/cryptochrome alpha/beta domain. 2 residues coordinate (6R)-5,10-methylene-5,6,7,8-tetrahydrofolate: Asn-109 and Glu-110. An FAD-binding site is contributed by Tyr-225. A DNA-binding site is contributed by Arg-229. 237-241 (TSMLS) is a binding site for FAD. 2 interaction with DNA regions span residues 278–285 (QILWREFY) and 345–346 (NR). Residue 376-378 (DGD) coordinates FAD. Gln-408 provides a ligand contact to DNA.

It belongs to the DNA photolyase class-1 family. In terms of assembly, monomer. FAD serves as cofactor. It depends on (6R)-5,10-methylene-5,6,7,8-tetrahydrofolate as a cofactor.

The enzyme catalyses cyclobutadipyrimidine (in DNA) = 2 pyrimidine residues (in DNA).. Functionally, involved in repair of UV radiation-induced DNA damage. Catalyzes the light-dependent monomerization (300-600 nm) of cyclobutyl pyrimidine dimers (in cis-syn configuration), which are formed between adjacent bases on the same DNA strand upon exposure to ultraviolet radiation. This Buchnera aphidicola subsp. Acyrthosiphon pisum (strain APS) (Acyrthosiphon pisum symbiotic bacterium) protein is Deoxyribodipyrimidine photo-lyase (phrB).